A 414-amino-acid polypeptide reads, in one-letter code: STAGA complex 65 subunit gamma (414 aa).

The disordered stretch occupies residues 87–108 (NQQQTEGVKTEESEPLPSCPGS). Ser-108 is modified (phosphoserine). A Glycyl lysine isopeptide (Lys-Gly) (interchain with G-Cter in SUMO2) cross-link involves residue Lys-271. A phosphoserine mark is found at Ser-323 and Ser-334. A disordered region spans residues 346–414 (PQESEEGNVS…QRCKKRMRKI (69 aa)). Residues 386–395 (SSYGSHSTDS) are compositionally biased toward low complexity.

As to quaternary structure, component of the STAGA transcription coactivator-HAT complex, at least composed of SUPT3H, SUPT7L, GCN5L2, TAF5L, TAF6L, TADA3L, TAD1L, TAF10, TAF12 and TAF9. Sumoylated. In terms of tissue distribution, expressed at high levels in adenocarcinomas and gliomas and low in esophageal cancers and malignant hematological disease. Also expressed at high level in the thymus, low in peripheral blood mononuclear cells, and lowest in the stomach, small intestine, and skeletal muscle.

The protein resides in the nucleus. The polypeptide is STAGA complex 65 subunit gamma (SUPT7L) (Homo sapiens (Human)).